Here is a 231-residue protein sequence, read N- to C-terminus: DNA mismatch repair protein MutH (231 aa).

The protein belongs to the MutH family.

It is found in the cytoplasm. Sequence-specific endonuclease that cleaves unmethylated GATC sequences. It is involved in DNA mismatch repair. This chain is DNA mismatch repair protein MutH, found in Klebsiella pneumoniae subsp. pneumoniae (strain ATCC 700721 / MGH 78578).